We begin with the raw amino-acid sequence, 355 residues long: Histidinol-phosphate aminotransferase (355 aa).

K211 bears the N6-(pyridoxal phosphate)lysine mark.

The protein belongs to the class-II pyridoxal-phosphate-dependent aminotransferase family. Histidinol-phosphate aminotransferase subfamily. Homodimer. Requires pyridoxal 5'-phosphate as cofactor.

The catalysed reaction is L-histidinol phosphate + 2-oxoglutarate = 3-(imidazol-4-yl)-2-oxopropyl phosphate + L-glutamate. It participates in amino-acid biosynthesis; L-histidine biosynthesis; L-histidine from 5-phospho-alpha-D-ribose 1-diphosphate: step 7/9. This chain is Histidinol-phosphate aminotransferase, found in Aeromonas salmonicida (strain A449).